A 973-amino-acid polypeptide reads, in one-letter code: Coatomer subunit beta (973 aa).

HEAT repeat units lie at residues 98–133 (HEMI…REAE) and 134–170 (LLEQ…VSEH). S181 carries the post-translational modification Phosphoserine. 2 HEAT repeats span residues 279–317 (NVLV…NNVG) and 318–354 (ALEE…SRNA). S540 bears the Phosphoserine mark.

As to quaternary structure, oligomeric complex that consists of at least the alpha, beta, beta', gamma, delta, epsilon and zeta subunits. The complex interacts with ARF1 and PAB1. In terms of processing, the N-terminus is blocked.

The protein localises to the cytoplasm. It localises to the golgi apparatus membrane. Its subcellular location is the cytoplasmic vesicle. It is found in the COPI-coated vesicle membrane. Its function is as follows. The coatomer is a cytosolic protein complex that binds to dilysine motifs and reversibly associates with Golgi non-clathrin-coated vesicles, which further mediate biosynthetic protein transport from the ER, via the Golgi up to the trans Golgi network. Coatomer complex is required for budding from Golgi membranes, and is essential for the retrograde Golgi-to-ER transport of dilysine-tagged proteins. Required for mitochondrial morphology. In Saccharomyces cerevisiae (strain ATCC 204508 / S288c) (Baker's yeast), this protein is Coatomer subunit beta (SEC26).